A 170-amino-acid polypeptide reads, in one-letter code: Macro domain-containing protein VPA0103 (170 aa).

In terms of domain architecture, Macro spans 1 to 170 (MNAISLVQGD…SIWQHALTQH (170 aa)).

Belongs to the MacroD-type family.

This is Macro domain-containing protein VPA0103 from Vibrio parahaemolyticus serotype O3:K6 (strain RIMD 2210633).